A 511-amino-acid polypeptide reads, in one-letter code: Sodium/proline symporter (511 aa).

The next 13 membrane-spanning stretches (helical) occupy residues 16–36, 54–74, 85–105, 139–159, 175–195, 199–219, 246–266, 284–304, 327–347, 381–401, 407–427, 438–458, and 467–487; these read WQTY…GFYG, IGPY…WMIM, LSAI…YFVV, IISG…GFVS, GLLI…YLAV, DFFQ…VALL, VLGI…PHII, LGIS…LTGI, ILFH…AIMS, FVLI…TIAW, ILNL…PLVL, AGAI…ISWI, and FFGM…TYIV.

It belongs to the sodium:solute symporter (SSF) (TC 2.A.21) family.

It localises to the cell membrane. The catalysed reaction is L-proline(in) + Na(+)(in) = L-proline(out) + Na(+)(out). Functionally, catalyzes the sodium-dependent uptake of extracellular L-proline. The protein is Sodium/proline symporter (putP) of Staphylococcus epidermidis (strain ATCC 12228 / FDA PCI 1200).